Consider the following 256-residue polypeptide: Capsid protein (256 aa).

Positions 3–20 match the Bipartite nuclear localization signal motif; that stretch reads KRPADIIISTPGSKVRRR. Positions 40-54 match the Nuclear localization signal motif; sequence KRQSWTNRPINRKPR. The segment at 68 to 85 is a zinc-finger region; sequence CEGPCKVQSFESRHDVVH. Positions 101 to 122 match the Nuclear export signal motif; that stretch reads LTHRVGKRFCVKSIYILGKIWM. Positions 200 to 247 match the Bipartite nuclear localization signal motif; sequence RRFFRVNNYVVYNQQEAGKYENHTENALMLYMACTHASNPVYATLKIR.

The protein belongs to the geminiviridae capsid protein family. Homomultimer. Binds to single-stranded and double-stranded viral DNA. Interacts (via nuclear localization signals) with host importin alpha-1a.

The protein resides in the virion. It is found in the host nucleus. In terms of biological role, encapsidates the viral DNA into characteristic twinned ('geminate') particles. Binds the genomic viral ssDNA and shuttles it into and out of the cell nucleus. The CP of bipartite geminiviruses is not required for cell-to-cell or systemic movement. This chain is Capsid protein, found in Manihot esculenta (Cassava).